The primary structure comprises 517 residues: Maturase K (517 aa).

It belongs to the intron maturase 2 family. MatK subfamily.

The protein localises to the plastid. It is found in the chloroplast. Its function is as follows. Usually encoded in the trnK tRNA gene intron. Probably assists in splicing its own and other chloroplast group II introns. This chain is Maturase K, found in Trillium grandiflorum (Large-flowered trillium).